Reading from the N-terminus, the 251-residue chain is 1-(5-phosphoribosyl)-5-[(5-phosphoribosylamino)methylideneamino] imidazole-4-carboxamide isomerase (251 aa).

Catalysis depends on aspartate 8, which acts as the Proton acceptor. Catalysis depends on aspartate 131, which acts as the Proton donor.

Belongs to the HisA/HisF family.

It is found in the cytoplasm. The enzyme catalyses 1-(5-phospho-beta-D-ribosyl)-5-[(5-phospho-beta-D-ribosylamino)methylideneamino]imidazole-4-carboxamide = 5-[(5-phospho-1-deoxy-D-ribulos-1-ylimino)methylamino]-1-(5-phospho-beta-D-ribosyl)imidazole-4-carboxamide. Its pathway is amino-acid biosynthesis; L-histidine biosynthesis; L-histidine from 5-phospho-alpha-D-ribose 1-diphosphate: step 4/9. This chain is 1-(5-phosphoribosyl)-5-[(5-phosphoribosylamino)methylideneamino] imidazole-4-carboxamide isomerase, found in Burkholderia cenocepacia (strain ATCC BAA-245 / DSM 16553 / LMG 16656 / NCTC 13227 / J2315 / CF5610) (Burkholderia cepacia (strain J2315)).